The following is a 478-amino-acid chain: Ninja-family protein 7 (478 aa).

3 disordered regions span residues 1 to 247 (MDDD…LTPG), 336 to 374 (SFTA…EKKA), and 454 to 478 (DAPA…SAEN). The span at 23–35 (KARDAPLEPKAEP) shows a compositional bias: basic and acidic residues. Residues 169 to 179 (ISISTDDGSTG) are compositionally biased toward polar residues. Positions 180-189 (ENEDVAESEA) are enriched in acidic residues. A compositionally biased stretch (low complexity) spans 233-242 (SFSGSESSSG). The span at 339-359 (AKDKADQTGTKQVDDGKKPRE) shows a compositional bias: basic and acidic residues.

This sequence belongs to the Ninja family.

It localises to the nucleus. This Zea mays (Maize) protein is Ninja-family protein 7.